A 264-amino-acid polypeptide reads, in one-letter code: MSMAFENVDYTSLDIPAAPFSDPARIPDFPKNKVPRHIGVIMDGNGRWAKQRGMVRTNGHQAAEPVVFDTIAGAIEAGVRYLSLYTFSTENWKRSPQEVRFLMGFSREIIHRRVEQMDEWGVRVRWSGRRPKLWKSVIDELEAAEERTKNNKVIDVVFCINYGGRAEIADACAAIAREVRDGKISGDRVTEKMIADHLYNPDIPDCDLVIRTSGEQRTSNFLPWEAAYAELDFVPELFPDCGRDVLWRSIDHYIHRDRRFGGVK.

The active site involves Asp43. Asp43 contributes to the Mg(2+) binding site. Substrate is bound by residues 44-47 (GNGR), Trp48, Arg56, His60, and 88-90 (STE). Asn91 functions as the Proton acceptor in the catalytic mechanism. Substrate is bound by residues Trp92, Arg94, Arg211, and 217–219 (RTS). Glu230 is a Mg(2+) binding site.

This sequence belongs to the UPP synthase family. In terms of assembly, homodimer. Requires Mg(2+) as cofactor.

In terms of biological role, catalyzes the condensation of isopentenyl diphosphate (IPP) with allylic pyrophosphates generating different type of terpenoids. The protein is Isoprenyl transferase of Bifidobacterium longum (strain NCC 2705).